A 335-amino-acid polypeptide reads, in one-letter code: HTH-type transcriptional regulator LacR (335 aa).

The 58-residue stretch at 1 to 58 (MRTIKEIALESGYSPATVSRLLNNDPNLSITADTKNKILEIANKLGYWEDHQEKKIKP) folds into the HTH lacI-type domain. Residues 4–23 (IKEIALESGYSPATVSRLLN) constitute a DNA-binding region (H-T-H motif).

The protein operates within carbohydrate metabolism; lactose degradation [regulation]. In terms of biological role, negatively regulates the transcription of the lactose utilization genes lacL and lacM. This is HTH-type transcriptional regulator LacR (lacR) from Lactobacillus helveticus (Lactobacillus suntoryeus).